The chain runs to 210 residues: ATP-dependent Clp protease proteolytic subunit (210 aa).

Serine 107 acts as the Nucleophile in catalysis. Residue histidine 132 is part of the active site.

It belongs to the peptidase S14 family. As to quaternary structure, fourteen ClpP subunits assemble into 2 heptameric rings which stack back to back to give a disk-like structure with a central cavity, resembling the structure of eukaryotic proteasomes.

It is found in the cytoplasm. The enzyme catalyses Hydrolysis of proteins to small peptides in the presence of ATP and magnesium. alpha-casein is the usual test substrate. In the absence of ATP, only oligopeptides shorter than five residues are hydrolyzed (such as succinyl-Leu-Tyr-|-NHMec, and Leu-Tyr-Leu-|-Tyr-Trp, in which cleavage of the -Tyr-|-Leu- and -Tyr-|-Trp bonds also occurs).. Cleaves peptides in various proteins in a process that requires ATP hydrolysis. Has a chymotrypsin-like activity. Plays a major role in the degradation of misfolded proteins. In Cereibacter sphaeroides (strain ATCC 17025 / ATH 2.4.3) (Rhodobacter sphaeroides), this protein is ATP-dependent Clp protease proteolytic subunit.